The following is a 183-amino-acid chain: Adenylate kinase (183 aa).

Gly-12–Thr-17 contacts ATP. The interval Ser-32 to Val-61 is NMP. AMP-binding positions include Thr-33, Arg-38, Glu-59 to Val-61, Gly-86 to Arg-89, and Gln-93. The segment at Ser-127–Asp-133 is LID. Arg-128 serves as a coordination point for ATP. AMP is bound by residues Arg-130 and Arg-141. An ATP-binding site is contributed by Gly-169.

This sequence belongs to the adenylate kinase family. As to quaternary structure, monomer.

It is found in the cytoplasm. The enzyme catalyses AMP + ATP = 2 ADP. The protein operates within purine metabolism; AMP biosynthesis via salvage pathway; AMP from ADP: step 1/1. In terms of biological role, catalyzes the reversible transfer of the terminal phosphate group between ATP and AMP. Plays an important role in cellular energy homeostasis and in adenine nucleotide metabolism. The protein is Adenylate kinase of Synechococcus sp. (strain CC9311).